Here is a 70-residue protein sequence, read N- to C-terminus: Small ribosomal subunit protein bS21 (70 aa).

Belongs to the bacterial ribosomal protein bS21 family.

This chain is Small ribosomal subunit protein bS21, found in Nitrosospira multiformis (strain ATCC 25196 / NCIMB 11849 / C 71).